The chain runs to 423 residues: Alpha-1-antichymotrypsin (423 aa).

The signal sequence occupies residues 1-23 (MERMLPLLALGLLAAGFCPAVLC). Asn33, Asn93, Asn106, Asn127, and Asn186 each carry an N-linked (GlcNAc...) asparagine glycan. The DNA-binding element occupies 235–237 (KKK). Asn271 carries an N-linked (GlcNAc...) asparagine glycan. The RCL stretch occupies residues 369-394 (GTEASAATAVKITLLSALVETRTIVR). The tract at residues 381–389 (TLLSALVET) is O-glycosylated at one site.

The protein belongs to the serpin family. In terms of assembly, interacts with DNAJC1. Post-translationally, N- and O-glycosylated. In terms of tissue distribution, plasma. Synthesized in the liver. Like the related alpha-1-antitrypsin, its concentration increases in the acute phase of inflammation or infection. Found in the amyloid plaques from the hippocampus of Alzheimer disease brains.

The protein localises to the secreted. Functionally, although its physiological function is unclear, it can inhibit neutrophil cathepsin G and mast cell chymase, both of which can convert angiotensin-1 to the active angiotensin-2. This is Alpha-1-antichymotrypsin (SERPINA3) from Homo sapiens (Human).